The primary structure comprises 1849 residues: UPF0606 protein KIAA1549L (1849 aa).

Polar residues predominate over residues 1–10 (MDHTASQNAQ). 4 disordered regions span residues 1–70 (MDHT…LLQL), 142–166 (ATANDSANPLHLSAAPENSRGPALS), 213–242 (PTENHASPSPVPEMPTLPAEGSDGSPPATR), and 529–586 (RHSV…ERNA). Composition is skewed to polar residues over residues 529 to 541 (RHSVSHPQLQLPN) and 552 to 586 (PGPTSTGSLQEMLSDGTDTGSEISSDINSSPERNA). Positions 958-986 (KFAQTMEQRLQKAFQDAERKVLNTKSNLT) form a coiled coil. Residues 1180-1200 (LWIIAAVLAPIAVVTVIIIII) traverse the membrane as a helical segment. Disordered stretches follow at residues 1258–1338 (LPIR…EEEG), 1460–1546 (SKNR…SQPS), 1656–1679 (RSTSDIGSKTRMAESTGPEPAQLH), and 1769–1819 (SRYP…APLT). Polar residues-rich tracts occupy residues 1290-1319 (PSENGSVISNESGKPSSGRRSPQNVMAQQK), 1463-1482 (RQQMKNSVYRSRQSLNSPSP), and 1537-1546 (ETSTLSSQPS). Low complexity-rich tracts occupy residues 1769 to 1786 (SRYPQSSPSRLPRQYSQP) and 1795 to 1809 (QAPAPSTAASQQSLA).

Belongs to the UPF0606 family.

The protein resides in the membrane. The protein is UPF0606 protein KIAA1549L (KIAA1549L) of Homo sapiens (Human).